The following is a 30-amino-acid chain: uncharacterized protein (30 aa).

This is an uncharacterized protein from Saccharomyces cerevisiae (strain ATCC 204508 / S288c) (Baker's yeast).